Here is a 324-residue protein sequence, read N- to C-terminus: UDP-N-acetylenolpyruvoylglucosamine reductase (324 aa).

An FAD-binding PCMH-type domain is found at 38-217 (AGGLAELMFQ…IRAEMDAVRQ (180 aa)). Residue Arg-183 is part of the active site. The active-site Proton donor is Ser-232. Glu-302 is a catalytic residue.

It belongs to the MurB family. FAD serves as cofactor.

It localises to the cytoplasm. It carries out the reaction UDP-N-acetyl-alpha-D-muramate + NADP(+) = UDP-N-acetyl-3-O-(1-carboxyvinyl)-alpha-D-glucosamine + NADPH + H(+). It participates in cell wall biogenesis; peptidoglycan biosynthesis. Cell wall formation. The chain is UDP-N-acetylenolpyruvoylglucosamine reductase from Allorhizobium ampelinum (strain ATCC BAA-846 / DSM 112012 / S4) (Agrobacterium vitis (strain S4)).